We begin with the raw amino-acid sequence, 72 residues long: Cytochrome c oxidase copper chaperone 2 (72 aa).

The Cu cation site is built by cysteine 32 and cysteine 33. Residues 32-72 form the CHCH domain; it reads CCACPDTKKLRDECIVEHGESACTKWIEAHILCLRSEGFKV. Short sequence motifs (cx9C motif) lie at residues 35–45 and 54–64; these read CPDTKKLRDEC and CTKWIEAHILC. Disulfide bonds link cysteine 35-cysteine 64 and cysteine 45-cysteine 54.

It belongs to the COX17 family.

It localises to the mitochondrion intermembrane space. In terms of biological role, copper chaperone for cytochrome c oxidase (COX). Binds 2 copper ions and delivers them to the Cu(A) site of COX. The chain is Cytochrome c oxidase copper chaperone 2 (COX17-2) from Arabidopsis thaliana (Mouse-ear cress).